A 286-amino-acid polypeptide reads, in one-letter code: L-rhamnose-binding lectin CSL1 (286 aa).

SUEL-type lectin domains are found at residues 96 to 186 (TTCE…YICL) and 193 to 280 (TCEG…YTCL).

In terms of biological role, L-rhamnose binding lectin. Has hemagglutinating activity towards rabbit erythrocytes, but not human type B erythrocytes. Hemagglutinating activity is inhibited by smooth-type lipopolysaccharide (LPS) from K.pneumoniae, E.coli K-235, S.flexneri 1A, A.salmonicida and S.minnesota and rough-type LPS from S.flexneri, but not by rough-type LPS from E.coli K12 and E.coli EH100. Agglutinates E.coli K12 and B.subtilis. The protein is L-rhamnose-binding lectin CSL1 of Oncorhynchus keta (Chum salmon).